Here is a 300-residue protein sequence, read N- to C-terminus: tRNA uridine(34) hydroxylase (300 aa).

Residues 128–222 (ADPEVIVVDT…YLEDVPQAQS (95 aa)) enclose the Rhodanese domain. The Cysteine persulfide intermediate role is filled by cysteine 182.

Belongs to the TrhO family.

The enzyme catalyses uridine(34) in tRNA + AH2 + O2 = 5-hydroxyuridine(34) in tRNA + A + H2O. Functionally, catalyzes oxygen-dependent 5-hydroxyuridine (ho5U) modification at position 34 in tRNAs. The chain is tRNA uridine(34) hydroxylase from Deinococcus radiodurans (strain ATCC 13939 / DSM 20539 / JCM 16871 / CCUG 27074 / LMG 4051 / NBRC 15346 / NCIMB 9279 / VKM B-1422 / R1).